The chain runs to 450 residues: tRNA modification GTPase MnmE (450 aa).

Positions 25, 86, and 126 each coordinate (6S)-5-formyl-5,6,7,8-tetrahydrofolate. A TrmE-type G domain is found at 221–373 (GLRVALVGRP…LVQALLERCG (153 aa)). K(+) is bound at residue asparagine 231. Residues 231–236 (NVGKSS), 250–256 (TELPGTT), 275–278 (DTAG), and 336–339 (NKAD) each bind GTP. Mg(2+) is bound at residue serine 235. 3 residues coordinate K(+): threonine 250, leucine 252, and threonine 255. Mg(2+) is bound at residue threonine 256. Lysine 450 is a binding site for (6S)-5-formyl-5,6,7,8-tetrahydrofolate.

This sequence belongs to the TRAFAC class TrmE-Era-EngA-EngB-Septin-like GTPase superfamily. TrmE GTPase family. Homodimer. Heterotetramer of two MnmE and two MnmG subunits. The cofactor is K(+).

It is found in the cytoplasm. Functionally, exhibits a very high intrinsic GTPase hydrolysis rate. Involved in the addition of a carboxymethylaminomethyl (cmnm) group at the wobble position (U34) of certain tRNAs, forming tRNA-cmnm(5)s(2)U34. The protein is tRNA modification GTPase MnmE of Parasynechococcus marenigrum (strain WH8102).